Consider the following 327-residue polypeptide: Glycerol-3-phosphate dehydrogenase [NAD(P)+] (327 aa).

Ser-10, Phe-11, Arg-31, and Lys-108 together coordinate NADPH. Sn-glycerol 3-phosphate-binding residues include Lys-108, Gly-136, and Ser-138. Ala-140 provides a ligand contact to NADPH. Residues Lys-191, Asp-246, Ser-256, Arg-257, and Asn-258 each coordinate sn-glycerol 3-phosphate. Lys-191 acts as the Proton acceptor in catalysis. Arg-257 serves as a coordination point for NADPH. Residues Leu-281 and Glu-283 each contribute to the NADPH site.

Belongs to the NAD-dependent glycerol-3-phosphate dehydrogenase family.

The protein resides in the cytoplasm. It catalyses the reaction sn-glycerol 3-phosphate + NAD(+) = dihydroxyacetone phosphate + NADH + H(+). The enzyme catalyses sn-glycerol 3-phosphate + NADP(+) = dihydroxyacetone phosphate + NADPH + H(+). Its pathway is membrane lipid metabolism; glycerophospholipid metabolism. Its function is as follows. Catalyzes the reduction of the glycolytic intermediate dihydroxyacetone phosphate (DHAP) to sn-glycerol 3-phosphate (G3P), the key precursor for phospholipid synthesis. This is Glycerol-3-phosphate dehydrogenase [NAD(P)+] from Ehrlichia ruminantium (strain Welgevonden).